A 419-amino-acid polypeptide reads, in one-letter code: S-adenosylmethionine synthase (419 aa).

Residue His15 coordinates ATP. Asp17 is a Mg(2+) binding site. A K(+)-binding site is contributed by Glu43. L-methionine-binding residues include Glu56 and Gln99. The interval 99 to 109 (QSPEIAQGVSC) is flexible loop. ATP contacts are provided by residues 173–175 (DGK), 253–254 (RF), Asp262, 268–269 (RK), Ala285, and Lys289. Asp262 is an L-methionine binding site. An L-methionine-binding site is contributed by Lys293.

It belongs to the AdoMet synthase family. Homotetramer; dimer of dimers. It depends on Mg(2+) as a cofactor. K(+) serves as cofactor.

Its subcellular location is the cytoplasm. It catalyses the reaction L-methionine + ATP + H2O = S-adenosyl-L-methionine + phosphate + diphosphate. It participates in amino-acid biosynthesis; S-adenosyl-L-methionine biosynthesis; S-adenosyl-L-methionine from L-methionine: step 1/1. Catalyzes the formation of S-adenosylmethionine (AdoMet) from methionine and ATP. The overall synthetic reaction is composed of two sequential steps, AdoMet formation and the subsequent tripolyphosphate hydrolysis which occurs prior to release of AdoMet from the enzyme. The sequence is that of S-adenosylmethionine synthase from Gloeobacter violaceus (strain ATCC 29082 / PCC 7421).